The sequence spans 1000 residues: Isoleucine--tRNA ligase, mitochondrial (1000 aa).

The transit peptide at 1 to 27 (MLGAWRAAPRLRLRARFGVASVWARSA) directs the protein to the mitochondrion. The 'HIGH' region motif lies at 102–112 (PYANGDPHVGH). Lys-649 and Lys-652 together coordinate ATP. The 'KMSKS' region motif lies at 649–653 (KMSKS).

This sequence belongs to the class-I aminoacyl-tRNA synthetase family.

The protein localises to the mitochondrion matrix. The catalysed reaction is tRNA(Ile) + L-isoleucine + ATP = L-isoleucyl-tRNA(Ile) + AMP + diphosphate. In terms of biological role, aminoacyl-tRNA synthetase that catalyzes the specific attachment of isoleucine to its cognate tRNA (tRNA(Ile)). This is Isoleucine--tRNA ligase, mitochondrial (IARS2) from Gallus gallus (Chicken).